Reading from the N-terminus, the 204-residue chain is MTGFSNKAIVIDGRGHLLGRLAAVIAKVLLEGNKVVVVRCEQINISGNFFRNKLKFMSFLRKRCNVNPARGPFHFRAPSKILWKTVRGMIPHKTERGKSALRRLRAYDGCPPPYDNRRRVVVPAALRVFCLKPGRKYCHVGRLSHEVGWKYRDVVRKLENKRKVKSVKLMAYEKKLKRITKESGEKVAKTTAPFTAVIQSYGYN.

Belongs to the universal ribosomal protein uL13 family.

The polypeptide is Large ribosomal subunit protein uL13 (RpL13A) (Spodoptera frugiperda (Fall armyworm)).